Consider the following 493-residue polypeptide: Cobyric acid synthase (493 aa).

One can recognise a GATase cobBQ-type domain in the interval 246–440; sequence PIDIAVIKMP…IHGVFDGVAF (195 aa). Cysteine 326 (nucleophile) is an active-site residue. Histidine 432 is a catalytic residue.

Belongs to the CobB/CobQ family. CobQ subfamily.

It functions in the pathway cofactor biosynthesis; adenosylcobalamin biosynthesis. Catalyzes amidations at positions B, D, E, and G on adenosylcobyrinic A,C-diamide. NH(2) groups are provided by glutamine, and one molecule of ATP is hydrogenolyzed for each amidation. In Clostridium botulinum (strain Loch Maree / Type A3), this protein is Cobyric acid synthase.